Reading from the N-terminus, the 170-residue chain is Small ribosomal subunit protein bS16 (170 aa).

Residues 109–170 (ALAEAEGGPS…AAESEAPAAE (62 aa)) form a disordered region. A compositionally biased stretch (basic and acidic residues) spans 131 to 150 (AKKDEQPTEKAAEPAAEKAA). A compositionally biased stretch (low complexity) spans 151-170 (EPAAEAPAEAAAESEAPAAE).

Belongs to the bacterial ribosomal protein bS16 family.

The sequence is that of Small ribosomal subunit protein bS16 from Mycolicibacterium gilvum (strain PYR-GCK) (Mycobacterium gilvum (strain PYR-GCK)).